A 215-amino-acid polypeptide reads, in one-letter code: Deoxyribose-phosphate aldolase (215 aa).

Asp-90 functions as the Proton donor/acceptor in the catalytic mechanism. The Schiff-base intermediate with acetaldehyde role is filled by Lys-152. Residue Lys-181 is the Proton donor/acceptor of the active site.

The protein belongs to the DeoC/FbaB aldolase family. DeoC type 1 subfamily.

The protein localises to the cytoplasm. The enzyme catalyses 2-deoxy-D-ribose 5-phosphate = D-glyceraldehyde 3-phosphate + acetaldehyde. Its pathway is carbohydrate degradation; 2-deoxy-D-ribose 1-phosphate degradation; D-glyceraldehyde 3-phosphate and acetaldehyde from 2-deoxy-alpha-D-ribose 1-phosphate: step 2/2. In terms of biological role, catalyzes a reversible aldol reaction between acetaldehyde and D-glyceraldehyde 3-phosphate to generate 2-deoxy-D-ribose 5-phosphate. The chain is Deoxyribose-phosphate aldolase from Ureaplasma urealyticum serovar 10 (strain ATCC 33699 / Western).